Here is a 106-residue protein sequence, read N- to C-terminus: ATP-dependent Clp protease adapter protein ClpS (106 aa).

This sequence belongs to the ClpS family. As to quaternary structure, binds to the N-terminal domain of the chaperone ClpA.

Involved in the modulation of the specificity of the ClpAP-mediated ATP-dependent protein degradation. The sequence is that of ATP-dependent Clp protease adapter protein ClpS from Yersinia pestis bv. Antiqua (strain Antiqua).